Reading from the N-terminus, the 1437-residue chain is MDFSFSFMQGIMGNTIQQPPQLIDSANIRQEDAFDNNSDIAEDGGQTPYEATLQQGFQYPATTEDLPPLTNGYPSSISVYETQTKYQSYNQYPNGSANGFGAVRNFSPTDYYHSEIPNTRPHEILEKPSPPQPPPPPSVPQTVIPKKTGSPEIKLKITKTIQNGRELFESSLCGDLLNEVQASEHTKSKHESRKEKRKKSNKHDSSRSEERKSHKIPKLEPEEQNRPNERVDTVSEKPREEPVLKEEAPVQPILSSVPTTEVSTGVKFQVGDLVWSKVGTYPWWPCMVSSDPQLEVHTKINTRGAREYHVQFFSNQPERAWVHEKRVREYKGHKQYEELLAEATKQASNHSEKQKIRKPRPQRERAQWDIGIAHAEKALKMTREERIEQYTFIYIDKQPEEALSQAKKSVASKTEVKKTRRPRSVLNTQPEQTNAGEVASSLSSTEIRRHSQRRHTSAEEEEPPPVKIAWKTAAARKSLPASITMHKGSLDLQKCNMSPVVKIEQVFALQNATGDGKFIDQFVYSTKGIGNKTEISVRGQDRLIISTPNQRNEKPTQSVSSPEATSGSTGSVEKKQQRRSIRTRSESEKSTEVVPKKKIKKEQVETVPQATVKTGLQKGASEISDSCKPLKKRSRASTDVEMTSSAYRDTSDSDSRGLSDLQVGFGKQVDSPSATADADVSDVQSMDSSLSRRGTGMSKKDTVCQICESSGDSLIPCEGECCKHFHLECLGLASLPDSKFICMECKTGQHPCFSCKVSGKDVKRCSVGACGKFYHEACVRKFPTAIFESKGFRCPQHCCSACSMEKDIHKASKGRMMRCLRCPVAYHSGDACIAAGSMLVSSYILICSNHSKRSSNSSAVNVGFCFVCARGLIVQDHSDPMFSSYAYKSHYLLNESNRAELMKLPMIPSSSASKKKCEKGGRLLCCESCPASFHPECLSIEMPEGCWNCNDCKAGKKLHYKQIVWVKLGNYRWWPAEICNPRSVPLNIQGLKHDLGDFPVFFFGSHDYYWVHQGRVFPYVEGDKSFAEGQTSINKTFKKALEEAAKRFQELKAQRESKEALEIEKNSRKPPPYKHIKANKVIGKVQIQVADLSEIPRCNCKPADENPCGLESECLNRMLQYECHPQVCPAGDRCQNQCFTKRLYPDAEIIKTERRGWGLRTKRSIKKGEFVNEYVGELIDEEECRLRIKRAHENSVTNFYMLTVTKDRIIDAGPKGNYSRFMNHSCNPNCETQKWTVNGDVRVGLFALCDIPAGMELTFNYNLDCLGNGRTECHCGADNCSGFLGVRPKSACASTNEEKAKNAKLKQKRRKIKTEPKQMHEDYCFQCGDGGELVMCDKKDCPKAYHLLCLNLTQPPYGKWECPWHQCDECSSAAVSFCEFCPHSFCKDHEKGALVPSALEGRLCCSEHDPMAPVSPEYWSKIKCKWESQDHGEEVKE.

Disordered stretches follow at residues 121–157 (PHEI…KLKI) and 181–252 (QASE…PVQP). The segment covering 128-139 (PSPPQPPPPPSV) has biased composition (pro residues). Position 150 is a phosphoserine (serine 150). The KIKL motif lies at 154-157 (KLKI). The span at 187 to 201 (KSKHESRKEKRKKSN) shows a compositional bias: basic residues. Basic and acidic residues predominate over residues 202–248 (KHDSSRSEERKSHKIPKLEPEEQNRPNERVDTVSEKPREEPVLKEEA). Glycyl lysine isopeptide (Lys-Gly) (interchain with G-Cter in SUMO2) cross-links involve residues lysine 218 and lysine 245. A PWWP 1 domain is found at 270–333 (VGDLVWSKVG…EKRVREYKGH (64 aa)). Disordered regions lie at residues 344-365 (TKQA…QRER) and 406-465 (AKKS…EPPP). Residue lysine 413 forms a Glycyl lysine isopeptide (Lys-Gly) (interchain with G-Cter in SUMO2) linkage. Positions 425–445 (VLNTQPEQTNAGEVASSLSST) are enriched in polar residues. Position 457 is a phosphoserine (serine 457). Glycyl lysine isopeptide (Lys-Gly) (interchain with G-Cter in SUMO2) cross-links involve residues lysine 502 and lysine 532. The segment at 540 to 696 (QDRLIISTPN…DSSLSRRGTG (157 aa)) is disordered. Residues 546–571 (STPNQRNEKPTQSVSSPEATSGSTGS) are compositionally biased toward polar residues. Basic and acidic residues predominate over residues 583–595 (TRSESEKSTEVVP). A phosphoserine mark is found at serine 585, serine 587, and serine 590. Lysine 628 is covalently cross-linked (Glycyl lysine isopeptide (Lys-Gly) (interchain with G-Cter in SUMO2)). Residue serine 655 is modified to Phosphoserine. The span at 682 to 692 (DVQSMDSSLSR) shows a compositional bias: polar residues. 3 PHD-type zinc fingers span residues 701–748 (DTVC…CKTG), 749–805 (QHPC…CSME), and 862–955 (VGFC…CKAG). The residue at position 790 (lysine 790) is an N6-acetyllysine. One can recognise a PWWP 2 domain in the interval 960 to 1022 (YKQIVWVKLG…QGRVFPYVEG (63 aa)). Residues 1033–1069 (INKTFKKALEEAAKRFQELKAQRESKEALEIEKNSRK) are a coiled coil. The AWS domain maps to 1093 to 1143 (SEIPRCNCKPADENPCGLESECLNRMLQYECHPQVCPAGDRCQNQCFTKRL). In terms of domain architecture, SET spans 1145 to 1262 (PDAEIIKTER…AGMELTFNYN (118 aa)). Lysine 1151 participates in a covalent cross-link: Glycyl lysine isopeptide (Lys-Gly) (interchain with G-Cter in SUMO2). A Post-SET domain is found at 1269–1285 (GRTECHCGADNCSGFLG). The PHD-type 4; atypical zinc finger occupies 1321–1368 (EDYCFQCGDGGELVMCDKKDCPKAYHLLCLNLTQPPYGKWECPWHQCD).

This sequence belongs to the class V-like SAM-binding methyltransferase superfamily. Histone-lysine methyltransferase family. SET2 subfamily. Interacts with BRD4. Interacts (via KIKL motif) with BRD3 (via NET domain). In terms of tissue distribution, highly expressed in brain, heart and skeletal muscle. Expressed at lower level in liver and lung.

The protein resides in the nucleus. The protein localises to the chromosome. The enzyme catalyses L-lysyl(4)-[histone H3] + 2 S-adenosyl-L-methionine = N(6),N(6)-dimethyl-L-lysyl(4)-[histone H3] + 2 S-adenosyl-L-homocysteine + 2 H(+). The catalysed reaction is L-lysyl(27)-[histone H3] + 2 S-adenosyl-L-methionine = N(6),N(6)-dimethyl-L-lysyl(27)-[histone H3] + 2 S-adenosyl-L-homocysteine + 2 H(+). In terms of biological role, histone methyltransferase. Preferentially dimethylates 'Lys-4' and 'Lys-27' of histone H3 forming H3K4me2 and H3K27me2. H3 'Lys-4' methylation represents a specific tag for epigenetic transcriptional activation, while 'Lys-27' is a mark for transcriptional repression. In Homo sapiens (Human), this protein is Histone-lysine N-methyltransferase NSD3.